The sequence spans 523 residues: GMP synthase [glutamine-hydrolyzing] (523 aa).

The Glutamine amidotransferase type-1 domain occupies 8–205 (KILILDFGSQ…VVNICGCETK (198 aa)). C85 functions as the Nucleophile in the catalytic mechanism. Active-site residues include H179 and E181. The GMPS ATP-PPase domain occupies 206 to 398 (WTAENIIEDA…LGLPAEMINR (193 aa)). 233–239 (SGGVDSS) lines the ATP pocket.

In terms of assembly, homodimer.

It catalyses the reaction XMP + L-glutamine + ATP + H2O = GMP + L-glutamate + AMP + diphosphate + 2 H(+). It functions in the pathway purine metabolism; GMP biosynthesis; GMP from XMP (L-Gln route): step 1/1. Catalyzes the synthesis of GMP from XMP. The sequence is that of GMP synthase [glutamine-hydrolyzing] from Haemophilus influenzae (strain PittGG).